Here is a 503-residue protein sequence, read N- to C-terminus: Probable protein kinase UbiB (503 aa).

A helical membrane pass occupies residues 13–35; that stretch reads TFYRYRLAGLCASLMGSGWICAL. In terms of domain architecture, Protein kinase spans 120 to 491; sequence EFETEPIASA…QQRQSLWLAV (372 aa). Residues 126–134 and lysine 148 contribute to the ATP site; that span reads IASASIAQV. The active-site Proton acceptor is aspartate 283. A helical transmembrane segment spans residues 485–502; it reads QSLWLAVIAVVLLLILLL.

This sequence belongs to the ABC1 family. UbiB subfamily.

It localises to the cell inner membrane. Its pathway is cofactor biosynthesis; ubiquinone biosynthesis [regulation]. Is probably a protein kinase regulator of UbiI activity which is involved in aerobic coenzyme Q (ubiquinone) biosynthesis. The sequence is that of Probable protein kinase UbiB from Neisseria meningitidis serogroup A / serotype 4A (strain DSM 15465 / Z2491).